Here is a 40-residue protein sequence, read N- to C-terminus: Hemoglobin subunit alpha-2 (40 aa).

Residues 1 to 40 (VGPHLDDYGGEALHRNFEVYPQTKTYFPHFDASAGSNQLK) enclose the Globin domain.

This sequence belongs to the globin family. In terms of assembly, heterotetramer of two alpha chains and two beta chains. As to expression, red blood cells.

Involved in oxygen transport from the lung to the various peripheral tissues. In Saara hardwickii (Indian spiny-tailed lizard), this protein is Hemoglobin subunit alpha-2.